A 255-amino-acid polypeptide reads, in one-letter code: Cobalt-precorrin-6A reductase (255 aa).

It belongs to the precorrin-6x reductase family.

The catalysed reaction is Co-precorrin-6B + NAD(+) = Co-precorrin-6A + NADH + H(+). The protein operates within cofactor biosynthesis; adenosylcobalamin biosynthesis; cob(II)yrinate a,c-diamide from sirohydrochlorin (anaerobic route): step 7/10. Functionally, catalyzes the reduction of the macrocycle of cobalt-precorrin-6A to cobalt-precorrin-6B. In Priestia megaterium (Bacillus megaterium), this protein is Cobalt-precorrin-6A reductase (cbiJ).